A 129-amino-acid polypeptide reads, in one-letter code: Snaclec rhodocetin subunit beta (129 aa).

Residues 3-125 form the C-type lectin domain; it reads RCPTTWSASK…EEKNAFLCKF (123 aa). Intrachain disulfides connect Cys4-Cys15, Cys32-Cys123, and Cys98-Cys115.

As to quaternary structure, heterotetramer of subunit alpha, beta, gamma and delta; only the gamma and the delta subunits are disulfide-linked. Alpha-beta heterodimer and gamma-delta heterodimer associate orthogonally, giving a cruciform conformation. This heterotetramer may covalently dimerizes thanks to the gamma subunit. Expressed by the venom gland.

Its subcellular location is the secreted. In terms of biological role, potent inhibitor of collagen-induced platelet aggregation. It acts by binding to the integrin alpha2A domain and blocks collagen binding to integrin alpha-2/beta-1 (ITGA2/ITGB1). The gamma/delta subunits mainly contribute to this activity. This chain is Snaclec rhodocetin subunit beta, found in Calloselasma rhodostoma (Malayan pit viper).